Here is a 203-residue protein sequence, read N- to C-terminus: NAD(P)H dehydrogenase (quinone) (203 aa).

Positions 3 to 194 constitute a Flavodoxin-like domain; the sequence is IMVVYYSAYG…AGANFQGRHV (192 aa). Residues 9–14 and 82–84 contribute to the FMN site; these read SAYGHV and ARF. An NAD(+)-binding site is contributed by Tyr-11. Substrate is bound at residue Trp-102. Residues 117–123 and His-138 contribute to the FMN site; that span reads STGTQHG.

Belongs to the WrbA family. The cofactor is FMN.

It catalyses the reaction a quinone + NADH + H(+) = a quinol + NAD(+). It carries out the reaction a quinone + NADPH + H(+) = a quinol + NADP(+). The protein is NAD(P)H dehydrogenase (quinone) of Syntrophus aciditrophicus (strain SB).